The sequence spans 155 residues: MSDKLTQIQDELDALLNMMQRQIAHIVLQAPPSVPPGQHRVDTMPEIKGKAASENPQSNPPQPAEPPVPEKISPEQFNQDLKEFSRDIVVKQQQVELLIASLPGLNVSEEQQVARMKELEKELEGLEDERAQAVREKEVLLKKVEDKIMSVGRSR.

Residues 29–73 (QAPPSVPPGQHRVDTMPEIKGKAASENPQSNPPQPAEPPVPEKIS) form a disordered region. Residues 39 to 51 (HRVDTMPEIKGKA) show a composition bias toward basic and acidic residues. Pro residues predominate over residues 58-69 (SNPPQPAEPPVP). A coiled-coil region spans residues 75-147 (EQFNQDLKEF…EVLLKKVEDK (73 aa)).

Belongs to the Mediator complex subunit 21 family. As to quaternary structure, component of the Mediator complex.

The protein resides in the nucleus. Functionally, component of the Mediator complex, a coactivator involved in the regulated transcription of nearly all RNA polymerase II-dependent genes. Mediator functions as a bridge to convey information from gene-specific regulatory proteins to the basal RNA polymerase II transcription machinery. Mediator is recruited to promoters by direct interactions with regulatory proteins and serves as a scaffold for the assembly of a functional preinitiation complex with RNA polymerase II and the general transcription factors. The chain is Mediator of RNA polymerase II transcription subunit 21 (SRB7) from Phaeosphaeria nodorum (strain SN15 / ATCC MYA-4574 / FGSC 10173) (Glume blotch fungus).